The following is a 352-amino-acid chain: Adenosine deaminase (352 aa).

Ala2 bears the N-acetylalanine mark. Residues His15 and His17 each contribute to the Zn(2+) site. Substrate is bound by residues His17 and Asp19. N6-acetyllysine is present on Lys54. Position 184 (Gly184) interacts with substrate. His214 is a Zn(2+) binding site. Glu217 functions as the Proton donor in the catalytic mechanism. The residue at position 232 (Lys232) is an N6-acetyllysine. Asp295 serves as a coordination point for Zn(2+). Asp296 is a substrate binding site.

The protein belongs to the metallo-dependent hydrolases superfamily. Adenosine and AMP deaminases family. Interacts with DPP4 (via extracellular domain). Interacts with PLG (via Kringle 4 domain); the interaction stimulates PLG activation when in complex with DPP4. Zn(2+) is required as a cofactor. As to expression, detected in brain neurons in the median emninence (at protein level). Expressed in secondary deciduum (at protein level). Found in all tissues, occurs in large amounts in T-lymphocytes and, at the time of weaning, in gastrointestinal tissues.

The protein resides in the cell membrane. It is found in the cell junction. The protein localises to the cytoplasmic vesicle lumen. It localises to the cytoplasm. Its subcellular location is the lysosome. The enzyme catalyses adenosine + H2O + H(+) = inosine + NH4(+). It carries out the reaction 2'-deoxyadenosine + H2O + H(+) = 2'-deoxyinosine + NH4(+). It catalyses the reaction cordycepin + H2O + H(+) = 3'-deoxyinosine + NH4(+). Catalyzes the hydrolytic deamination of adenosine and 2-deoxyadenosine. Plays an important role in purine metabolism and in adenosine homeostasis. Modulates signaling by extracellular adenosine, and so contributes indirectly to cellular signaling events. Acts as a positive regulator of T-cell coactivation, by binding DPP4. Its interaction with DPP4 regulates lymphocyte-epithelial cell adhesion. Enhances dendritic cell immunogenicity by affecting dendritic cell costimulatory molecule expression and cytokines and chemokines secretion. Enhances CD4+ T-cell differentiation and proliferation. Acts as a positive modulator of adenosine receptors ADORA1 and ADORA2A, by enhancing their ligand affinity via conformational change. Stimulates plasminogen activation. Plays a role in male fertility. Plays a protective role in early postimplantation embryonic development. Also responsible for the deamination of cordycepin (3'-deoxyadenosine), a fungal natural product that shows antitumor, antibacterial, antifungal, antivirus, and immune regulation properties. This is Adenosine deaminase (Ada) from Mus musculus (Mouse).